Here is a 457-residue protein sequence, read N- to C-terminus: ATP-dependent RNA helicase DbpA (457 aa).

A Q motif motif is present at residues 3–31 (AFSTLNVLPPAQLTNLNELGYLTMTPVQA). The Helicase ATP-binding domain occupies 34–205 (LPAILAGKDV…GRVQRDPLAI (172 aa)). Residue 47–54 (AKTGSGKT) coordinates ATP. The DEAD box signature appears at 153–156 (DEAD). A Helicase C-terminal domain is found at 230-376 (PLLQRLLSLH…QTPPANSSIA (147 aa)). The tract at residues 383–457 (ATLCIDGGKK…GKTCRVRLLK (75 aa)) is involved in 23S rRNA binding.

This sequence belongs to the DEAD box helicase family. DbpA subfamily. As to quaternary structure, monomer.

It is found in the cytoplasm. It carries out the reaction ATP + H2O = ADP + phosphate + H(+). With respect to regulation, requires hairpin 92 of 23S rRNA for optimal activity. ATPase activity is stimulated by interaction of the N-terminal domain with RNA. Its function is as follows. DEAD-box RNA helicase involved in the assembly of the 50S ribosomal subunit. Has an RNA-dependent ATPase activity, which is specific for 23S rRNA, and a 3' to 5' RNA helicase activity that uses the energy of ATP hydrolysis to destabilize and unwind short rRNA duplexes. Requires a single-stranded RNA loading site on the 3' side of the substrate helix. The protein is ATP-dependent RNA helicase DbpA of Escherichia coli (strain K12).